The sequence spans 686 residues: MKNNIINTQQSFVTMPNVIVPDIEKEIRRMENGACSSFSEDDDSASTSEESENENPHARGSFSYKSLRKGGPSQREQYLPGAIALFNVNNSSNKDQEPEEKKKKKKEKKSKSDDKNENKNDPEKKKKKKDKEKKKKEEKSKDKKEEEKKEVVVIDPSGNTYYNWLFCITLPVMYNWTMVIARACFDELQSDYLEYWLILDYVSDIVYLIDMFVRTRTGYLEQGLLVKEELKLINKYKSNLQFKLDVLSLIPTDLLYFKLGWNYPEIRLNRLLRFSRMFEFFQRTETRTNYPNIFRISNLVMYIVIIIHWNACVFYSISKAIGFGNDTWVYPDINDPEFGRLARKYVYSLYWSTLTLTTIGETPPPVRDSEYVFVVVDFLIGVLIFATIVGNIGSMISNMNAARAEFQARIDAIKQYMHFRNVSKDMEKRVIKWFDYLWTNKKTVDEKEVLKYLPDKLRAEIAINVHLDTLKKVRIFADCEAGLLVELVLKLQPQVYSPGDYICKKGDIGREMYIIKEGKLAVVADDGVTQFVVLSDGSYFGEISILNIKGSKAGNRRTANIKSIGYSDLFCLSKDDLMEALTEYPDAKTMLEEKGKQILMKDGLLDLNIANAGSDPKDLEEKVTRMEGSVDLLQTRFARILAEYESMQQKLKQRLTKVEKFLKPLIDTEFSSIEGPGAESGPIDST.

The Cytoplasmic segment spans residues 1-165 (MKNNIINTQQ…PSGNTYYNWL (165 aa)). Disordered stretches follow at residues 31–75 (ENGA…PSQR) and 87–149 (NVNN…EEKK). Residues 39-53 (SEDDDSASTSEESEN) are compositionally biased toward acidic residues. Residues 110–124 (SKSDDKNENKNDPEK) show a composition bias toward basic and acidic residues. The segment covering 125–134 (KKKKKDKEKK) has biased composition (basic residues). Residues 135 to 149 (KKEEKSKDKKEEEKK) show a composition bias toward basic and acidic residues. A helical membrane pass occupies residues 166–187 (FCITLPVMYNWTMVIARACFDE). Residues 188–197 (LQSDYLEYWL) lie on the Extracellular side of the membrane. The chain crosses the membrane as a helical span at residues 198–218 (ILDYVSDIVYLIDMFVRTRTG). At 219 to 243 (YLEQGLLVKEELKLINKYKSNLQFK) the chain is on the cytoplasmic side. A helical membrane pass occupies residues 244 to 262 (LDVLSLIPTDLLYFKLGWN). Over 263 to 267 (YPEIR) the chain is Extracellular. Residues 268 to 286 (LNRLLRFSRMFEFFQRTET) traverse the membrane as a helical segment. Residues 287–293 (RTNYPNI) lie on the Cytoplasmic side of the membrane. The tract at residues 291–399 (PNIFRISNLV…GNIGSMISNM (109 aa)) is ion conduction pathway. Residues 294-317 (FRISNLVMYIVIIIHWNACVFYSI) traverse the membrane as a helical segment. The Extracellular portion of the chain corresponds to 318–340 (SKAIGFGNDTWVYPDINDPEFGR). An N-linked (GlcNAc...) asparagine glycan is attached at Asn-325. 2 helical membrane passes run 341-375 (LARK…VFVV) and 376-400 (VDFL…SNMN). Positions 358 to 361 (TIGE) are selectivity filter. The tract at residues 401–477 (AARAEFQARI…DTLKKVRIFA (77 aa)) is C-linker. Topologically, residues 401–686 (AARAEFQARI…GAESGPIDST (286 aa)) are cytoplasmic. Positions 481–601 (AGLLVELVLK…EEKGKQILMK (121 aa)) are cyclic nucleotide-binding domain. Gly-541, Ser-544, Arg-557, and Thr-558 together coordinate 3',5'-cyclic GMP. Residues Arg-557 and Thr-558 each contribute to the 3',5'-cyclic AMP site. Residues 619-673 (LEEKVTRMEGSVDLLQTRFARILAEYESMQQKLKQRLTKVEKFLKPLIDTEFSSI) adopt a coiled-coil conformation.

It belongs to the cyclic nucleotide-gated cation channel (TC 1.A.1.5) family. CNGA1 subfamily. In terms of assembly, forms heterotetrameric channels composed of CNGA1 and CNGB1 subunits with 3:1 stoichiometry. May also form cyclic nucleotide-activated homotetrameric channels, that are efficiently activated by saturating cGMP, but poorly activated by saturating cAMP compared to the heterotetramer with CNGB1. The channel binds Ca(2+)-bound CALM1 via CaM1 and CaM2 regions of the CNGB1 subunit; this interaction modulates the affinity of the channel for cNMPs in response to intracellular Ca(2+) levels. In terms of tissue distribution, rod cells in the retina.

The protein resides in the cell membrane. It carries out the reaction Ca(2+)(in) = Ca(2+)(out). It catalyses the reaction Na(+)(in) = Na(+)(out). The enzyme catalyses K(+)(in) = K(+)(out). The catalysed reaction is NH4(+)(in) = NH4(+)(out). It carries out the reaction Rb(+)(in) = Rb(+)(out). It catalyses the reaction Li(+)(in) = Li(+)(out). The enzyme catalyses Cs(+)(in) = Cs(+)(out). Channel opening is activated by cGMP and at a much lesser extent by cAMP. Ca(2+) binding concominantly blocks monovalent cation currents. Inhibited by L-cis-diltiazem. Its function is as follows. Pore-forming subunit of the rod cyclic nucleotide-gated channel. Mediates rod photoresponses at dim light converting transient changes in intracellular cGMP levels into electrical signals. In the dark, cGMP levels are high and keep the channel open enabling a steady inward current carried by Na(+) and Ca(2+) ions that leads to membrane depolarization and neurotransmitter release from synaptic terminals. Upon photon absorption cGMP levels decline leading to channel closure and membrane hyperpolarization that ultimately slows neurotransmitter release and signals the presence of light, the end point of the phototransduction cascade. Conducts cGMP- and cAMP-gated ion currents, with permeability for monovalent and divalent cations. The selectivity for Ca(2+) over Na(+) increases with cGMP concentrations, whereas the selectivity among monovalent ions is independent of the cGMP levels. This chain is Cyclic nucleotide-gated channel alpha-1, found in Homo sapiens (Human).